Consider the following 1388-residue polypeptide: CRISPR-associated endonuclease Cas9 2 (1388 aa).

The active-site For RuvC-like nuclease domain is aspartate 10. Mg(2+) contacts are provided by aspartate 10, glutamate 763, and glutamate 767. The HNH Cas9-type domain maps to 771–928; the sequence is TNQGKSNSQQ…DKAGFIQRQL (158 aa). Histidine 847 functions as the Proton acceptor for HNH nuclease domain in the catalytic mechanism. Residue histidine 990 participates in Mg(2+) binding. The span at 1100-1109 shows a compositional bias: basic and acidic residues; that stretch reads EQNHGLDRGK. The segment at 1100-1130 is disordered; that stretch reads EQNHGLDRGKPKGLFNANLSSKPKPNSNENL. The PAM-interacting domain (PI) stretch occupies residues 1102 to 1388; it reads NHGLDRGKPK…RIDLAKLGEG (287 aa). A compositionally biased stretch (polar residues) spans 1116–1129; it reads ANLSSKPKPNSNEN.

It belongs to the CRISPR-associated protein Cas9 family. Subtype II-A subfamily. As to quaternary structure, monomer. Binds crRNA and tracrRNA. The cofactor is Mg(2+).

In terms of biological role, CRISPR (clustered regularly interspaced short palindromic repeat) is an adaptive immune system that provides protection against mobile genetic elements (viruses, transposable elements and conjugative plasmids). CRISPR clusters contain spacers, sequences complementary to antecedent mobile elements, and target invading nucleic acids. CRISPR clusters are transcribed and processed into CRISPR RNA (crRNA). In type II CRISPR systems correct processing of pre-crRNA requires a trans-encoded small RNA (tracrRNA), endogenous ribonuclease 3 (rnc) and this protein. The tracrRNA serves as a guide for ribonuclease 3-aided processing of pre-crRNA. Subsequently Cas9/crRNA/tracrRNA endonucleolytically cleaves linear or circular dsDNA target complementary to the spacer yielding blunt ends; Cas9 is inactive in the absence of the 2 guide RNAs (gRNA). Cas9 recognizes a 3'-G-rich protospacer adjacent motif (PAM, GGG in this organism) in the CRISPR repeat sequences to help distinguish self versus nonself, as targets within the bacterial CRISPR locus do not have PAMs. PAM recognition is also required for catalytic activity. Complements the gRNA coprocessing defect in a cas9 deletion in S.pyogenes strain 370, and cuts target DNA in Cas9:gRNAs mixing experiments with S.mutans strain UA159. The chain is CRISPR-associated endonuclease Cas9 2 from Streptococcus thermophilus (strain ATCC BAA-491 / LMD-9).